Here is a 464-residue protein sequence, read N- to C-terminus: UDP-N-acetylmuramate--L-alanine ligase (464 aa).

115 to 121 lines the ATP pocket; it reads GSHGKTT.

The protein belongs to the MurCDEF family.

Its subcellular location is the cytoplasm. It carries out the reaction UDP-N-acetyl-alpha-D-muramate + L-alanine + ATP = UDP-N-acetyl-alpha-D-muramoyl-L-alanine + ADP + phosphate + H(+). The protein operates within cell wall biogenesis; peptidoglycan biosynthesis. Cell wall formation. The protein is UDP-N-acetylmuramate--L-alanine ligase of Pelagibacter ubique (strain HTCC1062).